The sequence spans 738 residues: Photosystem I P700 chlorophyll a apoprotein A2 (738 aa).

8 consecutive transmembrane segments (helical) span residues 46–69 (LFST…FHIA), 135–158 (LYQG…LHLQ), 175–199 (LNHH…HVAI), 273–291 (IAHH…GHMY), 333–356 (LHFQ…QHMY), 372–398 (AALY…IFFI), 420–442 (AIIS…LYVH), and 521–539 (FLVH…LILV). 2 residues coordinate [4Fe-4S] cluster: Cys563 and Cys572. 2 helical membrane-spanning segments follow: residues 579–600 (AFYL…YWHW) and 647–669 (LAVW…MFLI). Chlorophyll a contacts are provided by His658, Met666, and Tyr674. Residue Trp675 coordinates phylloquinone. A helical membrane pass occupies residues 711–731 (VVGLAHFTVGYVLTYGAFLIA).

This sequence belongs to the PsaA/PsaB family. The PsaA/B heterodimer binds the P700 chlorophyll special pair and subsequent electron acceptors. PSI consists of a core antenna complex that captures photons, and an electron transfer chain that converts photonic excitation into a charge separation. The cyanobacterial PSI reaction center is composed of one copy each of PsaA,B,C,D,E,F,I,J,K,L,M and X, and forms trimeric complexes. The cofactor is PSI electron transfer chain: 5 chlorophyll a, 1 chlorophyll a', 2 phylloquinones and 3 4Fe-4S clusters. PSI core antenna: 90 chlorophyll a, 22 carotenoids, 3 phospholipids and 1 galactolipid. P700 is a chlorophyll a/chlorophyll a' dimer, A0 is one or more chlorophyll a, A1 is one or both phylloquinones and FX is a shared 4Fe-4S iron-sulfur center..

It is found in the cellular thylakoid membrane. The enzyme catalyses reduced [plastocyanin] + hnu + oxidized [2Fe-2S]-[ferredoxin] = oxidized [plastocyanin] + reduced [2Fe-2S]-[ferredoxin]. In terms of biological role, psaA and PsaB bind P700, the primary electron donor of photosystem I (PSI), as well as the electron acceptors A0, A1 and FX. PSI is a plastocyanin/cytochrome c6-ferredoxin oxidoreductase, converting photonic excitation into a charge separation, which transfers an electron from the donor P700 chlorophyll pair to the spectroscopically characterized acceptors A0, A1, FX, FA and FB in turn. Oxidized P700 is reduced on the lumenal side of the thylakoid membrane by plastocyanin or cytochrome c6. This is Photosystem I P700 chlorophyll a apoprotein A2 from Synechococcus sp. (strain CC9311).